The sequence spans 122 residues: Large ribosomal subunit protein uL14 (122 aa).

This sequence belongs to the universal ribosomal protein uL14 family. As to quaternary structure, part of the 50S ribosomal subunit. Forms a cluster with proteins L3 and L19. In the 70S ribosome, L14 and L19 interact and together make contacts with the 16S rRNA in bridges B5 and B8.

In terms of biological role, binds to 23S rRNA. Forms part of two intersubunit bridges in the 70S ribosome. In Campylobacter jejuni subsp. jejuni serotype O:6 (strain 81116 / NCTC 11828), this protein is Large ribosomal subunit protein uL14.